The chain runs to 703 residues: Histone-lysine N-methyltransferase SETDB2 (703 aa).

The 71-residue stretch at 178–248 (FTKGNPLQLP…DNFSFNNHVR (71 aa)) folds into the MBD domain. Residues 310–384 (KCCNCTDGCL…LCQNRVVQHG (75 aa)) enclose the Pre-SET domain. The Zn(2+) site is built by cysteine 312, cysteine 314, cysteine 318, cysteine 324, cysteine 326, cysteine 365, cysteine 369, cysteine 371, and cysteine 376. Residues 387–678 (LRLQVFKTNT…AGTELTWDYS (292 aa)) form the SET domain. 397 to 399 (KGW) is an S-adenosyl-L-methionine binding site. The segment at 492 to 588 (TFSPRQARSG…SSSVISGGHP (97 aa)) is disordered. Residues 511 to 525 (RRPKTKTSMLQKRRR) are compositionally biased toward basic residues. Polar residues predominate over residues 550 to 560 (PEQKSSAGTKI). Low complexity predominate over residues 571–586 (SGYVSEESSSSVISGG). Residues arginine 632 and 635–636 (NH) each bind S-adenosyl-L-methionine. Cysteine 638, cysteine 691, cysteine 693, and cysteine 698 together coordinate Zn(2+).

The protein belongs to the class V-like SAM-binding methyltransferase superfamily.

It localises to the nucleus. The protein resides in the chromosome. It catalyses the reaction N(6),N(6)-dimethyl-L-lysyl(9)-[histone H3] + S-adenosyl-L-methionine = N(6),N(6),N(6)-trimethyl-L-lysyl(9)-[histone H3] + S-adenosyl-L-homocysteine + H(+). Histone methyltransferase involved in left-right axis specification in early development and mitosis. Specifically trimethylates 'Lys-9' of histone H3 (H3K9me3). H3K9me3 is a specific tag for epigenetic transcriptional repression that recruits HP1 (CBX1, CBX3 and/or CBX5) proteins to methylated histones. Contributes to H3K9me3 in both the interspersed repetitive elements and centromere-associated repeats. Plays a role in chromosome condensation and segregation during mitosis. The protein is Histone-lysine N-methyltransferase SETDB2 (setdb2) of Xenopus laevis (African clawed frog).